The following is a 1118-amino-acid chain: Pleckstrin homology domain-containing family A member 7 (1118 aa).

2 consecutive WW domains span residues 8–41 (DTLPEHWSYGVCRDGRVFFINDQLRCTTWLHPRT) and 53–86 (SDLPRGWEEGFTEEGASFFIDHNQQTTTFRHPVT). Over residues 100-113 (EEPHPHMSKPERNQ) the composition is skewed to basic and acidic residues. Positions 100–145 (EEPHPHMSKPERNQRPSSMVSETSTAGTTSTLEAKPGPKIVKSSSK) are disordered. The segment covering 114–131 (RPSSMVSETSTAGTTSTL) has biased composition (polar residues). Residues 163–281 (PVVVRGWLHK…WVRAMNQAAQ (119 aa)) enclose the PH domain. Basic and acidic residues-rich tracts occupy residues 334–355 (FNRREQEEERFRAQRDPLEGRR) and 434–443 (HWTKAQKGDG). Disordered regions lie at residues 334-512 (FNRR…RRAH) and 528-629 (QFRH…RRSM). Residues 452-481 (LPRQGPSQPLSFPENYQSLPKSTRHLSGSS) show a composition bias toward polar residues. Positions 494–512 (YAQDRASHLKMSSEERRAH) are enriched in basic and acidic residues. 6 positions are modified to phosphoserine: S533, S542, S566, S601, S605, and S609. The segment at 535-693 (TAPIGAGSPE…AESDIDVKLS (159 aa)) is interaction with CTNND1. Pro residues predominate over residues 564 to 579 (PPSPSDIPPPGPPRPF). A compositionally biased stretch (basic and acidic residues) spans 586 to 602 (TPAERVTVKPPEQRRSV). Residues 697 to 798 (EQDRILQDLE…LQEQHRRAFF (102 aa)) are a coiled coil. Disordered regions lie at residues 839–873 (KTVPLFPHPSVPSLSPTESKPALQPSPPTSPVRTP) and 886–968 (VPYR…EQGQ). S857 and S864 each carry phosphoserine. T867 carries the phosphothreonine modification. 3 positions are modified to phosphoserine: S868, S900, and S904. Residues 930–939 (DQPPAVPPLP) show a composition bias toward pro residues. Basic and acidic residues predominate over residues 955-966 (RQSDERKRDREQ). Phosphoserine occurs at positions 983 and 990. Positions 1003–1024 (GSESRYQTLPGRGLSGSTSRLQ) are disordered. Positions 1064–1091 (QRGKMSAEEQLERMKRHQKALVRERKRT) form a coiled coil.

As to quaternary structure, interacts with CAMSAP3 and CTNND1. Interacts (via WW domains) with TSPAN33 (via cytoplasmic domain) and with PDZD11; the interaction with TSPAN33 is dependent on PDZD11 being bound to PLEKHA7 and facilitates the docking of ADAM10 to zonula adherens through interaction of TSPAN33 with ADAM10. In terms of tissue distribution, expressed in kidney and lung (at protein level).

It is found in the cell junction. It localises to the adherens junction. The protein resides in the cytoplasm. The protein localises to the cytoskeleton. Its subcellular location is the microtubule organizing center. It is found in the centrosome. Functionally, required for zonula adherens biogenesis and maintenance. Acts via its interaction with CAMSAP3, which anchors microtubules at their minus-ends to zonula adherens, leading to the recruitment of KIFC3 kinesin to the junctional site. Mediates docking of ADAM10 to zonula adherens through a PDZD11-dependent interaction with the ADAM10-binding protein TSPAN33. This is Pleckstrin homology domain-containing family A member 7 (Plekha7) from Mus musculus (Mouse).